The following is an 82-amino-acid chain: Turripeptide Gsp9.2 (82 aa).

Residues 1 to 23 (MMAKLMITVMMVLLLSLQQGADG) form the signal peptide. The propeptide occupies 24–46 (RSERWRKNQMAASSIMRNLITAR). Residues Pro-49 and Pro-50 each carry the 4-hydroxyproline modification. 3 disulfide bridges follow: Cys-53-Cys-68, Cys-58-Cys-72, and Cys-64-Cys-79. Glu-56 bears the 4-carboxyglutamate mark.

The protein belongs to the Pg turripeptide superfamily. As to expression, expressed by the venom duct.

It is found in the secreted. The protein is Turripeptide Gsp9.2 of Gemmula speciosa (Splendid gem-turris).